Here is a 514-residue protein sequence, read N- to C-terminus: CENP-B homolog protein 2 (514 aa).

The 76-residue stretch at 70 to 145 folds into the HTH CENPB-type domain; the sequence is QIRRNRQGKY…KKRCLKHGLK (76 aa). The 213-residue stretch at 172 to 384 folds into the DDE-1 domain; sequence FDPKDIFNMD…FEPSIIYNCF (213 aa).

Its subcellular location is the nucleus. It localises to the chromosome. The protein resides in the centromere. Its function is as follows. Binds to the central core and core-associated repeat regions of centromeric heterochromatin. In Schizosaccharomyces pombe (strain 972 / ATCC 24843) (Fission yeast), this protein is CENP-B homolog protein 2 (cbh2).